A 46-amino-acid polypeptide reads, in one-letter code: uncharacterized protein (46 aa).

This is an uncharacterized protein from Dictyostelium discoideum (Social amoeba).